Consider the following 94-residue polypeptide: Pyrimidine/purine nucleoside phosphorylase (94 aa).

This sequence belongs to the nucleoside phosphorylase PpnP family.

The enzyme catalyses a purine D-ribonucleoside + phosphate = a purine nucleobase + alpha-D-ribose 1-phosphate. It catalyses the reaction adenosine + phosphate = alpha-D-ribose 1-phosphate + adenine. It carries out the reaction cytidine + phosphate = cytosine + alpha-D-ribose 1-phosphate. The catalysed reaction is guanosine + phosphate = alpha-D-ribose 1-phosphate + guanine. The enzyme catalyses inosine + phosphate = alpha-D-ribose 1-phosphate + hypoxanthine. It catalyses the reaction thymidine + phosphate = 2-deoxy-alpha-D-ribose 1-phosphate + thymine. It carries out the reaction uridine + phosphate = alpha-D-ribose 1-phosphate + uracil. The catalysed reaction is xanthosine + phosphate = alpha-D-ribose 1-phosphate + xanthine. In terms of biological role, catalyzes the phosphorolysis of diverse nucleosides, yielding D-ribose 1-phosphate and the respective free bases. Can use uridine, adenosine, guanosine, cytidine, thymidine, inosine and xanthosine as substrates. Also catalyzes the reverse reactions. The protein is Pyrimidine/purine nucleoside phosphorylase of Salmonella arizonae (strain ATCC BAA-731 / CDC346-86 / RSK2980).